The sequence spans 179 residues: Natural killer cells antigen CD94 (179 aa).

Over 1–10 (MAVFKTTLWR) the chain is Cytoplasmic. Residues 11–31 (LISGTLGIICLSLMATLGILL) traverse the membrane as a helical; Signal-anchor for type II membrane protein segment. The Extracellular portion of the chain corresponds to 32-179 (KNSFTKLSVE…NRYICKQQLI (148 aa)). Cystine bridges form between cysteine 58–cysteine 70 and cysteine 61–cysteine 72. A C-type lectin domain is found at 68 to 175 (YRCNCYFISS…CETKNRYICK (108 aa)). 2 N-linked (GlcNAc...) asparagine glycosylation sites follow: asparagine 83 and asparagine 132. 2 cysteine pairs are disulfide-bonded: cysteine 89/cysteine 174 and cysteine 152/cysteine 166.

As to quaternary structure, can form disulfide-bonded heterodimer with NKG2 family members KLRC1 and KLRC2. KLRD1-KLRC1 heterodimer interacts with peptide-bound MHC-E-B2M heterotrimeric complex. KLRD1 plays a prominent role in directly interacting with MHC-E. KLRD1-KLRC1 interacts with much higher affinity with peptide-bound MHC-E-B2M than KLRD1-KLRC2. Interacts with the adapter protein TYROBP/DAP12; this interaction is required for cell surface expression and cell activation. In terms of tissue distribution, natural killer cells.

Its subcellular location is the cell membrane. In terms of biological role, immune receptor involved in self-nonself discrimination. In complex with KLRC1 or KLRC2 on cytotoxic and regulatory lymphocyte subsets, recognizes non-classical major histocompatibility (MHC) class Ib molecule MHC-E loaded with self-peptides derived from the signal sequence of classical MHC class Ia and non-classical MHC class Ib molecules. Enables cytotoxic cells to monitor the expression of MHC class I molecules in healthy cells and to tolerate self. Primarily functions as a ligand binding subunit as it lacks the capacity to signal. Functionally, KLRD1-KLRC1 acts as an immune inhibitory receptor. Key inhibitory receptor on natural killer (NK) cells that regulates their activation and effector functions. Dominantly counteracts T cell receptor signaling on a subset of memory/effector CD8-positive T cells as part of an antigen-driven response to avoid autoimmunity. On intraepithelial CD8-positive gamma-delta regulatory T cells triggers TGFB1 secretion, which in turn limits the cytotoxic programming of intraepithelial CD8-positive alpha-beta T cells, distinguishing harmless from pathogenic antigens. In MHC-E-rich tumor microenvironment, acts as an immune inhibitory checkpoint and may contribute to progressive loss of effector functions of NK cells and tumor-specific T cells, a state known as cell exhaustion. Upon MHC-E-peptide binding, transmits intracellular signals through KLRC1 immunoreceptor tyrosine-based inhibition motifs (ITIMs) by recruiting INPP5D/SHIP-1 and INPPL1/SHIP-2 tyrosine phosphatases to ITIMs, and ultimately opposing signals transmitted by activating receptors through dephosphorylation of proximal signaling molecules. KLRD1-KLRC2 acts as an immune activating receptor. On cytotoxic lymphocyte subsets recognizes MHC-E loaded with signal sequence-derived peptides from non-classical MHC class Ib MHC-G molecules, likely playing a role in the generation and effector functions of adaptive NK cells and in maternal-fetal tolerance during pregnancy. Regulates the effector functions of terminally differentiated cytotoxic lymphocyte subsets, and in particular may play a role in adaptive NK cell response to viral infection. Upon MHC-E-peptide binding, transmits intracellular signals via the adapter protein TYROBP/DAP12, triggering the phosphorylation of proximal signaling molecules and cell activation. The protein is Natural killer cells antigen CD94 (KLRD1) of Macaca mulatta (Rhesus macaque).